The sequence spans 240 residues: Thiopurine S-methyltransferase (240 aa).

24–35 (WKEKWVTRHISF) serves as a coordination point for S-adenosyl-L-methionine. Ser-34 bears the Phosphoserine mark. Phe-35 serves as a coordination point for substrate. Lys-53 is subject to N6-acetyllysine. Residues Leu-64, Glu-85, 129 to 130 (SI), and Arg-147 contribute to the S-adenosyl-L-methionine site.

Belongs to the class I-like SAM-binding methyltransferase superfamily. TPMT family. Monomer.

It is found in the cytoplasm. The catalysed reaction is S-adenosyl-L-methionine + a thiopurine = S-adenosyl-L-homocysteine + a thiopurine S-methylether.. It carries out the reaction mercaptopurine + S-adenosyl-L-methionine = 6-methylthiopurine + S-adenosyl-L-homocysteine + H(+). Functionally, catalyzes the S-methylation of thiopurine drugs such as 6-mercaptopurine (also called mercaptopurine, 6-MP or its brand name Purinethol) using S-adenosyl-L-methionine as the methyl donor. TPMT activity modulates the cytotoxic effects of thiopurine prodrugs. A natural substrate for this enzyme has yet to be identified. This chain is Thiopurine S-methyltransferase (Tpmt), found in Mus musculus (Mouse).